The primary structure comprises 160 residues: MSQVTGFDQSNVAQYSSFDPLGSLEHAGSNLGNFIQRNNPFPSLSQSASHTFDDVRSDSGKIFDELKSEADKFYDDAKHGLSDIDYRDFYASDPGNTVLRASMQSPYLNSYMDINNAPNVIPLQAPPIVTNRNSKDYNILFVVVILLLLFVAWRCYVNKR.

A helical membrane pass occupies residues 137–157 (YNILFVVVILLLLFVAWRCYV).

It is found in the host membrane. It localises to the virion. This is an uncharacterized protein from Acanthamoeba polyphaga mimivirus (APMV).